The primary structure comprises 521 residues: Bifunctional purine biosynthesis protein PurH (521 aa).

Residues 1–145 (MIKQALISVS…KNHRDVTVVV (145 aa)) enclose the MGS-like domain.

It belongs to the PurH family.

It catalyses the reaction (6R)-10-formyltetrahydrofolate + 5-amino-1-(5-phospho-beta-D-ribosyl)imidazole-4-carboxamide = 5-formamido-1-(5-phospho-D-ribosyl)imidazole-4-carboxamide + (6S)-5,6,7,8-tetrahydrofolate. It carries out the reaction IMP + H2O = 5-formamido-1-(5-phospho-D-ribosyl)imidazole-4-carboxamide. The protein operates within purine metabolism; IMP biosynthesis via de novo pathway; 5-formamido-1-(5-phospho-D-ribosyl)imidazole-4-carboxamide from 5-amino-1-(5-phospho-D-ribosyl)imidazole-4-carboxamide (10-formyl THF route): step 1/1. It participates in purine metabolism; IMP biosynthesis via de novo pathway; IMP from 5-formamido-1-(5-phospho-D-ribosyl)imidazole-4-carboxamide: step 1/1. The protein is Bifunctional purine biosynthesis protein PurH of Burkholderia ambifaria (strain MC40-6).